The primary structure comprises 156 residues: MNINATLLGQAIAFFIFVVFCMKYVWPPLMAAIEARQKAIADGLSSAERAKKDLDLAKANATDQLKEAKLQAAEIIEQANKRKAQIIDEAAAGAHSEREKILAQGRAEIEAERHRAKEELRKQVAALAIAGAEKILARQIDQAANSDIVDKLVAEL.

Residues 11–31 (AIAFFIFVVFCMKYVWPPLMA) traverse the membrane as a helical segment.

Belongs to the ATPase B chain family. In terms of assembly, F-type ATPases have 2 components, F(1) - the catalytic core - and F(0) - the membrane proton channel. F(1) has five subunits: alpha(3), beta(3), gamma(1), delta(1), epsilon(1). F(0) has three main subunits: a(1), b(2) and c(10-14). The alpha and beta chains form an alternating ring which encloses part of the gamma chain. F(1) is attached to F(0) by a central stalk formed by the gamma and epsilon chains, while a peripheral stalk is formed by the delta and b chains.

The protein localises to the cell inner membrane. In terms of biological role, f(1)F(0) ATP synthase produces ATP from ADP in the presence of a proton or sodium gradient. F-type ATPases consist of two structural domains, F(1) containing the extramembraneous catalytic core and F(0) containing the membrane proton channel, linked together by a central stalk and a peripheral stalk. During catalysis, ATP synthesis in the catalytic domain of F(1) is coupled via a rotary mechanism of the central stalk subunits to proton translocation. Its function is as follows. Component of the F(0) channel, it forms part of the peripheral stalk, linking F(1) to F(0). The polypeptide is ATP synthase subunit b (Aeromonas hydrophila subsp. hydrophila (strain ATCC 7966 / DSM 30187 / BCRC 13018 / CCUG 14551 / JCM 1027 / KCTC 2358 / NCIMB 9240 / NCTC 8049)).